A 175-amino-acid polypeptide reads, in one-letter code: Di-N-acetylchitobiase (175 aa).

The first 38 residues, 1 to 38, serve as a signal peptide directing secretion; that stretch reads MARLQLAGSRRLVPLPRRAPRLAPLLLPLLLALPDGAR. A GH18 domain is found at 39–175; it reads ADCPCKVPAL…SFHHEIKGSQ (137 aa). A glycan (N-linked (GlcNAc...) asparagine) is linked at N115. The active-site Proton donor is E143.

This sequence belongs to the glycosyl hydrolase 18 family.

Its subcellular location is the lysosome. Its function is as follows. Involved in the degradation of asparagine-linked glycoproteins. Hydrolyze of N-acetyl-beta-D-glucosamine (1-4)N-acetylglucosamine chitobiose core from the reducing end of the bond, it requires prior cleavage by glycosylasparaginase. The polypeptide is Di-N-acetylchitobiase (CTBS) (Bos taurus (Bovine)).